The following is a 447-amino-acid chain: Clusterin (447 aa).

An N-terminal signal peptide occupies residues 1–21; the sequence is MKILLLCVALLLTWDNGMVLG. The Nuclear localization signal signature appears at 77–80; that stretch reads KKKK. 5 disulfides stabilise this stretch: Cys101–Cys312, Cys112–Cys304, Cys115–Cys301, Cys120–Cys294, and Cys128–Cys284. Residue Asn102 is glycosylated (N-linked (GlcNAc...) asparagine). Position 132 is a phosphoserine (Ser132). Asn144, Asn290, Asn327, Asn353, and Asn373 each carry an N-linked (GlcNAc...) asparagine glycan. Ser394 bears the Phosphoserine mark. The short motif at 441-445 is the Nuclear localization signal element; sequence RRKSR.

The protein belongs to the clusterin family. Antiparallel disulfide-linked heterodimer of an alpha chain and a beta chain. Self-associates and forms higher oligomers. Interacts with a broad range of misfolded proteins, including APP, APOC2 and LYZ. Slightly acidic pH promotes interaction with misfolded proteins. Forms high-molecular weight oligomers upon interaction with misfolded proteins. Interacts with APOA1, LRP2, CLUAP1 and PON1. Interacts with the complement membrane attack complex. Interacts (via alpha chain) with XRCC6. Interacts with SYVN1, COMMD1, BTRC, CUL1 and with ubiquitin and SCF (SKP1-CUL1-F-box protein) E3 ubiquitin-protein ligase complexes. Interacts (via alpha chain) with BAX in stressed cells, where BAX undergoes a conformation change leading to association with the mitochondrial membrane. Does not interact with BAX in unstressed cells. Found in a complex with LTF, CLU, EPPIN and SEMG1. Interacts (immaturely glycosylated pre-secreted form) with HSPA5; this interaction promotes CLU stability and facilitates stress-induced CLU retrotranslocation from the secretory pathway to the mitochondria, thereby reducing stress-induced apoptosis by stabilizing mitochondrial membrane integrity. Interacts with BCL2L1; this interaction releases and activates BAX and promotes cell death. Interacts with TGFBR2 and ACVR1. Interacts (secreted form) with STMN3; this interaction may act as an important modulator during neuronal differentiation. Interacts with VLDLR and LRP8. Proteolytically cleaved on its way through the secretory system, probably within the Golgi lumen. Proteolytic cleavage is not necessary for its chaperone activity. All non-secreted forms are not proteolytically cleaved. Chaperone activity of uncleaved forms is dependent on a non-reducing environment. In terms of processing, polyubiquitinated, leading to proteasomal degradation. Under cellular stress, the intracellular level of cleaved form is reduced due to proteasomal degradation. Post-translationally, extensively glycosylated with sulfated N-linked carbohydrates. About 30% of the protein mass is comprised of complex N-linked carbohydrate. Endoplasmic reticulum (ER) stress induces changes in glycosylation status and increases level of hypoglycosylated forms. Core carbohydrates are essential for chaperone activity. Non-secreted forms are hypoglycosylated or unglycosylated. As to expression, detected in Sertoli cells (at protein level). Detected in cultured Sertoli cells, testis, epididymis, liver and brain.

The protein localises to the secreted. It localises to the nucleus. The protein resides in the cytoplasm. It is found in the mitochondrion membrane. Its subcellular location is the cytosol. The protein localises to the microsome. It localises to the endoplasmic reticulum. The protein resides in the mitochondrion. It is found in the perinuclear region. Its subcellular location is the cytoplasmic vesicle. The protein localises to the secretory vesicle. It localises to the chromaffin granule. Functions as extracellular chaperone that prevents aggregation of non native proteins. Prevents stress-induced aggregation of blood plasma proteins. Inhibits formation of amyloid fibrils by APP, APOC2, B2M, CALCA, CSN3, SNCA and aggregation-prone LYZ variants (in vitro). Does not require ATP. Maintains partially unfolded proteins in a state appropriate for subsequent refolding by other chaperones, such as HSPA8/HSC70. Does not refold proteins by itself. Binding to cell surface receptors triggers internalization of the chaperone-client complex and subsequent lysosomal or proteasomal degradation. When secreted, protects cells against apoptosis and against cytolysis by complement: inhibits assembly of the complement membrane attack complex (MAC) by preventing polymerization of C9 pore component of the MAC complex. Intracellular forms interact with ubiquitin and SCF (SKP1-CUL1-F-box protein) E3 ubiquitin-protein ligase complexes and promote the ubiquitination and subsequent proteasomal degradation of target proteins. Promotes proteasomal degradation of COMMD1 and IKBKB. Modulates NF-kappa-B transcriptional activity. Following stress, promotes apoptosis. Inhibits apoptosis when associated with the mitochondrial membrane by interference with BAX-dependent release of cytochrome c into the cytoplasm. Plays a role in the regulation of cell proliferation. An intracellular form suppresses stress-induced apoptosis by stabilizing mitochondrial membrane integrity through interaction with HSPA5. Secreted form does not affect caspase or BAX-mediated intrinsic apoptosis and TNF-induced NF-kappa-B-activity. Secreted form act as an important modulator during neuronal differentiation through interaction with STMN3. Plays a role in the clearance of immune complexes that arise during cell injury. This chain is Clusterin, found in Rattus norvegicus (Rat).